A 173-amino-acid chain; its full sequence is Inorganic pyrophosphatase (173 aa).

Residues K29, R43, and Y55 each coordinate substrate. Residues D65, D70, and D102 each contribute to the Mg(2+) site. Y141 contributes to the substrate binding site.

The protein belongs to the PPase family. Homohexamer. Mg(2+) is required as a cofactor.

The protein resides in the cytoplasm. The enzyme catalyses diphosphate + H2O = 2 phosphate + H(+). Its function is as follows. Catalyzes the hydrolysis of inorganic pyrophosphate (PPi) forming two phosphate ions. The sequence is that of Inorganic pyrophosphatase from Gluconobacter oxydans (strain 621H) (Gluconobacter suboxydans).